The sequence spans 250 residues: Histidine utilization repressor (250 aa).

The 69-residue stretch at 20–88 (APLYARVKQM…QGVGTFVAEP (69 aa)) folds into the HTH gntR-type domain. Residues 48-67 (ESELVSQLGFSRMTINRALR) constitute a DNA-binding region (H-T-H motif).

Its pathway is amino-acid degradation; L-histidine degradation into L-glutamate [regulation]. In terms of biological role, repressor which binds to the hutP region in the histidine utilization (hut) operon. It blocks the expression of all the hut genes in the absence of inducer. This chain is Histidine utilization repressor (hutC), found in Pseudomonas aeruginosa (strain ATCC 15692 / DSM 22644 / CIP 104116 / JCM 14847 / LMG 12228 / 1C / PRS 101 / PAO1).